The primary structure comprises 476 residues: Phosphomethylpyrimidine synthase (476 aa).

A disordered region spans residues M1 to D27. Basic and acidic residues predominate over residues H7–D27. Substrate contacts are provided by residues N67, M96, Y125, H160, S180–G182, D221–R224, and E260. H264 serves as a coordination point for Zn(2+). A substrate-binding site is contributed by Y287. H328 contacts Zn(2+). Residues C408, C411, and C416 each coordinate [4Fe-4S] cluster. The interval R425–D476 is disordered. The span at E436–A447 shows a compositional bias: low complexity.

It belongs to the ThiC family. [4Fe-4S] cluster serves as cofactor.

It catalyses the reaction 5-amino-1-(5-phospho-beta-D-ribosyl)imidazole + S-adenosyl-L-methionine = 4-amino-2-methyl-5-(phosphooxymethyl)pyrimidine + CO + 5'-deoxyadenosine + formate + L-methionine + 3 H(+). The protein operates within cofactor biosynthesis; thiamine diphosphate biosynthesis. Functionally, catalyzes the synthesis of the hydroxymethylpyrimidine phosphate (HMP-P) moiety of thiamine from aminoimidazole ribotide (AIR) in a radical S-adenosyl-L-methionine (SAM)-dependent reaction. The sequence is that of Phosphomethylpyrimidine synthase from Halobacterium salinarum (strain ATCC 29341 / DSM 671 / R1).